An 82-amino-acid polypeptide reads, in one-letter code: MNSYFSALPLKCVRRPFILSRNEGWGIKRFYVADEPHRSFLCMQEGVRRGGGESEITQRKADVLRKSIRSADRYKEDRSCRT.

This is an uncharacterized protein from Treponema pallidum (strain Nichols).